The primary structure comprises 87 residues: Small ribosomal subunit protein uS17 (87 aa).

It belongs to the universal ribosomal protein uS17 family. Part of the 30S ribosomal subunit.

One of the primary rRNA binding proteins, it binds specifically to the 5'-end of 16S ribosomal RNA. The sequence is that of Small ribosomal subunit protein uS17 from Oceanobacillus iheyensis (strain DSM 14371 / CIP 107618 / JCM 11309 / KCTC 3954 / HTE831).